Consider the following 493-residue polypeptide: Alpha-amylase-related protein (493 aa).

The signal sequence occupies residues 1–19 (MFKFALTQTLCLAGSLSLA). Pyrrolidone carboxylic acid is present on glutamine 20. Cysteine 47 and cysteine 103 are disulfide-bonded. The Ca(2+) site is built by asparagine 117, glutamine 168, and aspartate 177. Cysteines 156 and 170 form a disulfide. Arginine 205 is a chloride binding site. Aspartate 207 serves as the catalytic Nucleophile. Position 211 (histidine 211) interacts with Ca(2+). Glutamate 244 serves as the catalytic Proton donor. Positions 307 and 342 each coordinate chloride. 3 disulfides stabilise this stretch: cysteine 375–cysteine 381, cysteine 417–cysteine 440, and cysteine 447–cysteine 459.

It belongs to the glycosyl hydrolase 13 family. As to quaternary structure, monomer. Requires Ca(2+) as cofactor. The cofactor is chloride.

It is found in the secreted. It carries out the reaction Endohydrolysis of (1-&gt;4)-alpha-D-glucosidic linkages in polysaccharides containing three or more (1-&gt;4)-alpha-linked D-glucose units.. The protein is Alpha-amylase-related protein (Amyrel) of Drosophila mauritiana (Fruit fly).